The chain runs to 211 residues: Probable endopeptidase cgR_2070 (211 aa).

An N-terminal signal peptide occupies residues 1–35 (MGKHRRNNSNATRKAVAASAVALGATAAIASPAQA). One can recognise a NlpC/P60 domain in the interval 97 to 211 (ASTGQAIVDA…YMPFHSAVRF (115 aa)). Cys-127 acts as the Nucleophile in catalysis. His-175 serves as the catalytic Proton acceptor. The active site involves His-187.

Belongs to the peptidase C40 family.

The protein resides in the secreted. This chain is Probable endopeptidase cgR_2070, found in Corynebacterium glutamicum (strain R).